An 825-amino-acid chain; its full sequence is Probable inorganic carbon transporter subunit DabA (825 aa).

Zn(2+) is bound by residues cysteine 346, aspartate 348, histidine 516, and cysteine 531.

The protein belongs to the inorganic carbon transporter (TC 9.A.2) DabA family. Forms a complex with DabB. It depends on Zn(2+) as a cofactor.

The protein resides in the cell inner membrane. Functionally, part of an energy-coupled inorganic carbon pump. This Paracidovorax citrulli (strain AAC00-1) (Acidovorax citrulli) protein is Probable inorganic carbon transporter subunit DabA.